The following is a 201-amino-acid chain: Small ribosomal subunit protein uS4c (201 aa).

The disordered stretch occupies residues 13–43; it reads RRLGDLPGLSRKAIKRPYPPGEHGQKPRKPS. An S4 RNA-binding domain is found at 90–154; that stretch reads MRLDNTIFRL…SKQLVESYLA (65 aa).

This sequence belongs to the universal ribosomal protein uS4 family. As to quaternary structure, part of the 30S ribosomal subunit. Contacts protein S5. The interaction surface between S4 and S5 is involved in control of translational fidelity.

The protein localises to the plastid. The protein resides in the chloroplast. One of the primary rRNA binding proteins, it binds directly to 16S rRNA where it nucleates assembly of the body of the 30S subunit. In terms of biological role, with S5 and S12 plays an important role in translational accuracy. This Porphyra purpurea (Red seaweed) protein is Small ribosomal subunit protein uS4c (rps4).